The following is a 329-amino-acid chain: UDP-N-acetylenolpyruvoylglucosamine reductase (329 aa).

An FAD-binding PCMH-type domain is found at 28–192 (RVGGPADLLC…ARVEVRLHAG (165 aa)). Arg-172 is an active-site residue. The interval 202–227 (REDRERRRATQPLDRPTFGSTFTNPP) is disordered. Catalysis depends on Ser-221, which acts as the Proton donor. Residue Glu-291 is part of the active site. The segment at 307–329 (DGHAAAGGGPGAASGGVRPPEAT) is disordered. Gly residues predominate over residues 311-320 (AAGGGPGAAS).

Belongs to the MurB family. FAD serves as cofactor.

Its subcellular location is the cytoplasm. It carries out the reaction UDP-N-acetyl-alpha-D-muramate + NADP(+) = UDP-N-acetyl-3-O-(1-carboxyvinyl)-alpha-D-glucosamine + NADPH + H(+). It functions in the pathway cell wall biogenesis; peptidoglycan biosynthesis. In terms of biological role, cell wall formation. The protein is UDP-N-acetylenolpyruvoylglucosamine reductase of Anaeromyxobacter sp. (strain K).